The following is a 381-amino-acid chain: DNA primase DnaG (381 aa).

The Toprim domain maps to 173 to 259; it reads DAILVVEGRS…EVEDLEKDEI (87 aa). The Mg(2+) site is built by Glu-179, Asp-221, and Asp-223.

Belongs to the archaeal DnaG primase family. As to quaternary structure, forms a ternary complex with MCM helicase and DNA. Component of the archaeal exosome complex. It depends on Mg(2+) as a cofactor.

The enzyme catalyses ssDNA + n NTP = ssDNA/pppN(pN)n-1 hybrid + (n-1) diphosphate.. Functionally, RNA polymerase that catalyzes the synthesis of short RNA molecules used as primers for DNA polymerase during DNA replication. Also part of the exosome, which is a complex involved in RNA degradation. Acts as a poly(A)-binding protein that enhances the interaction between heteromeric, adenine-rich transcripts and the exosome. The sequence is that of DNA primase DnaG from Methanothermobacter thermautotrophicus (strain ATCC 29096 / DSM 1053 / JCM 10044 / NBRC 100330 / Delta H) (Methanobacterium thermoautotrophicum).